Consider the following 426-residue polypeptide: Cytochrome c biogenesis protein Ccs1 (426 aa).

3 helical membrane passes run 11 to 31 (LKFA…GSII), 70 to 90 (NFWF…CTFF), and 153 to 173 (IAPV…IFAS).

It belongs to the Ccs1/CcsB family. In terms of assembly, may interact with CcsA.

The protein resides in the plastid. It localises to the chloroplast thylakoid membrane. In terms of biological role, required during biogenesis of c-type cytochromes (cytochrome c6 and cytochrome f) at the step of heme attachment. The polypeptide is Cytochrome c biogenesis protein Ccs1 (Heterosigma akashiwo (strain CCMP452 / OLISTH)).